Consider the following 154-residue polypeptide: Superoxide dismutase [Cu-Zn] (154 aa).

3 residues coordinate Cu cation: histidine 47, histidine 49, and histidine 64. An intrachain disulfide couples cysteine 58 to cysteine 147. Zn(2+) is bound by residues histidine 64, histidine 72, histidine 81, and aspartate 84. Histidine 121 is a Cu cation binding site. The tract at residues 122 to 143 (GGTDDLGKGGNEESLKTGNAGP) is disordered. Residues 123–136 (GTDDLGKGGNEESL) show a composition bias toward basic and acidic residues. Residue arginine 144 coordinates substrate.

Belongs to the Cu-Zn superoxide dismutase family. As to quaternary structure, homodimer. Cu cation is required as a cofactor. Requires Zn(2+) as cofactor.

It is found in the cytoplasm. The enzyme catalyses 2 superoxide + 2 H(+) = H2O2 + O2. Destroys radicals which are normally produced within the cells and which are toxic to biological systems. The polypeptide is Superoxide dismutase [Cu-Zn] (SOD1) (Cordyceps militaris (Caterpillar fungus)).